Here is a 172-residue protein sequence, read N- to C-terminus: Chorion protein S18 (172 aa).

The signal sequence occupies residues 1 to 17; it reads MMKFMCICLCAISAVSA.

It belongs to the chorion protein S15/S18 family.

It is found in the secreted. Functionally, chorion membrane (egg shell) protein; plays a role in protecting the egg from the environment. This chain is Chorion protein S18 (Cp18), found in Drosophila melanogaster (Fruit fly).